A 213-amino-acid chain; its full sequence is MGVHKIQPKDHLKPQNLEGISNEQIEPHFEAHYKGYVAKYNEIQEKLADQNFADRSKANQNYSEYRELKVEETFNYMGVVLHELYFGMLAPGGKGEPSEALKKKIEEDLGGLDACTNELKAAAIAFRGWAILGLDIFSGRLVVNGLDAHNVYNLTGLIPLIVIDTYEHAYYVDYKNKRPPYIDAFFKNINWDVVNERFEKAMKAYEALKDFIK.

Fe cation contacts are provided by H28, H82, D164, and H168.

It belongs to the iron/manganese superoxide dismutase family. In terms of assembly, homotetramer. Fe cation serves as cofactor.

The catalysed reaction is 2 superoxide + 2 H(+) = H2O2 + O2. Functionally, destroys superoxide anion radicals which are normally produced within the cells and which are toxic to biological systems. The chain is Superoxide dismutase [Fe] (sodB) from Aquifex aeolicus (strain VF5).